A 978-amino-acid chain; its full sequence is Tyrosine-protein kinase transforming protein fms (978 aa).

Over 1–543 the chain is Extracellular; that stretch reads RMPSGPGHYG…IGAHTPLPDE (543 aa). 5 consecutive Ig-like C2-type domains span residues 55-134, 141-231, 236-331, 333-431, and 434-533; these read PVIQ…IHLY, PWKV…KVQK, PATL…RVVE, AYSN…LTLR, and PEVR…WPIS. The cysteines at positions 76 and 118 are disulfide-linked. Asn79, Asn107, Asn128, Asn187, Asn309, Asn320, Asn336, Asn369, Asn444, Asn511, and Asn524 each carry an N-linked (GlcNAc...) asparagine; by host glycan. Intrachain disulfides connect Cys161/Cys211 and Cys258/Cys312. A disulfide bridge links Cys451 with Cys516. Residues 544–568 form a helical membrane-spanning segment; that stretch reads LLFTPVLLTCMSIMALLLLLLLLLL. Topologically, residues 569 to 978 are cytoplasmic; sequence YKYKQKPKYQ…PWQRTPPVAR (410 aa). The 330-residue stretch at 613–942 folds into the Protein kinase domain; it reads LQFGKTLGTG…PTFQQICSLL (330 aa). ATP is bound by residues 619 to 627 and Lys647; that span reads LGTGAFGKV. The active-site Proton acceptor is Asp810. Residue Tyr841 is modified to Phosphotyrosine; by autocatalysis. The interval 952 to 978 is disordered; the sequence is VPNYTNLPSSSSSRLLRPWQRTPPVAR. Low complexity predominate over residues 958–969; the sequence is LPSSSSSRLLRP. A Phosphothreonine modification is found at Thr973.

It belongs to the protein kinase superfamily. Tyr protein kinase family. CSF-1/PDGF receptor subfamily.

It is found in the membrane. The catalysed reaction is L-tyrosyl-[protein] + ATP = O-phospho-L-tyrosyl-[protein] + ADP + H(+). In terms of biological role, truncated version of the receptor for colony-stimulating factor 1 (CSF-1). The sequence is that of Tyrosine-protein kinase transforming protein fms (V-FMS) from Felidae (cat family).